The following is an 871-amino-acid chain: MERHCLFFVIFSLILHLVQAQDPIGFINLDCGLSIQGSPYKESSTGLTYTSDDGFVQSGKIGKITKELESLYKKPERTLRYFPDGVRNCFSLNVTRGTKYLIKPTFLYGNYDGRNVIPDFDLYIGPNMWITVNTDNTIKEILHVSKSNTLQVCLVKTGTSIPYINTLELRPLADDIYTNESGSLNYLFRVYYSNLKGYIEYPDDVHDRIWKQILPYQDWQILTTNLQINVSNDYDLPQRVMKTAVTPIKASTTTMEFPWNLEPPTSQFYLFLHFAELQSLQANETREFNVVLNGNVTFKSYSPKFLEMQTVYSTAPKQCDGGKCLLQLVKTSRSTLPPLINAMEAYTVLDFPQIETNVDEVIAIKNIQSTYGLSKTTWQGDPCVPKKFLWDGLNCNNSDDSTPPIITSLNLSSSGLTGIIVLTIQNLANLQELDLSNNNLSGGVPEFLADMKSLLVINLSGNNLSGVVPQKLIEKKMLKLNIEGNPKLNCTVESCVNKDEEGGRQIKSMTIPIVASIGSVVAFTVALMIFCVVRKNNPSNDEAPTSCMLPADSRSSEPTIVTKNKKFTYAEVLTMTNNFQKILGKGGFGIVYYGSVNGTEQVAVKMLSHSSAQGYKQFKAEVELLLRVHHKNLVGLVGYCEEGDKLALIYEYMANGDLDEHMSGKRGGSILNWGTRLKIALEAAQGLEYLHNGCKPLMVHRDVKTTNILLNEHFDTKLADFGLSRSFPIEGETHVSTVVAGTIGYLDPEYYRTNWLTEKSDVYSFGVVLLVMITNQPVIDQNREKRHIAEWVGGMLTKGDIKSITDPNLLGDYNSGSVWKAVELAMSCMNPSSMTRPTMSQVVFELKECLASESSREVSMTFGTEVAPMAR.

The first 20 residues, 1–20 (MERHCLFFVIFSLILHLVQA), serve as a signal peptide directing secretion. At 21–512 (QDPIGFINLD…GRQIKSMTIP (492 aa)) the chain is on the extracellular side. Residues Asn-93, Asn-179, Asn-229, Asn-283, Asn-295, Asn-396, Asn-410, Asn-439, Asn-458, Asn-463, and Asn-489 are each glycosylated (N-linked (GlcNAc...) asparagine). LRR repeat units follow at residues 405–426 (IITS…TIQN), 429–449 (NLQE…EFLA), and 453–474 (SLLV…KLIE). Residues 513–533 (IVASIGSVVAFTVALMIFCVV) traverse the membrane as a helical segment. Topologically, residues 534-871 (RKNNPSNDEA…FGTEVAPMAR (338 aa)) are cytoplasmic. Phosphothreonine is present on Thr-568. The 274-residue stretch at 577–850 (NNFQKILGKG…QVVFELKECL (274 aa)) folds into the Protein kinase domain. ATP contacts are provided by residues 583 to 591 (LGKGGFGIV) and Lys-605. Tyr-650 carries the phosphotyrosine modification. Asp-702 acts as the Proton acceptor in catalysis. Ser-736 is subject to Phosphoserine. 2 positions are modified to phosphothreonine: Thr-737 and Thr-742. Tyr-750 is modified (phosphotyrosine).

Belongs to the protein kinase superfamily. Ser/Thr protein kinase family.

It localises to the membrane. It carries out the reaction L-seryl-[protein] + ATP = O-phospho-L-seryl-[protein] + ADP + H(+). The enzyme catalyses L-threonyl-[protein] + ATP = O-phospho-L-threonyl-[protein] + ADP + H(+). The protein is Probable LRR receptor-like serine/threonine-protein kinase At1g51810 of Arabidopsis thaliana (Mouse-ear cress).